Reading from the N-terminus, the 273-residue chain is Putative ankyrin repeat protein RBE_0317 (273 aa).

ANK repeat units lie at residues 31–60, 93–123, 127–157, 161–191, and 195–225; these read LGKE…DFYS, NGNT…EVNT, GGNS…NVNE, YGDT…DVNE, and QGET…DTKQ.

This chain is Putative ankyrin repeat protein RBE_0317, found in Rickettsia bellii (strain RML369-C).